The sequence spans 316 residues: MKRHTRKIAIIGTGLVGSSCAYSIVNQGICEELLLIDINHERAVGEAMDLSHCINFTNTRTKVYAGSYEDCKDMDIVIITAGPAPKPGQSRLDTLGASAKIMESVVGGVMASGFDGIFLLASNPVDIITYQVWKLSGLPRNRVIGTGTSLDSSRLRTILSEMLHVDPRSIHGYSLGEHGDSQMVAWSHVTVGGKPILQILEEQKERFGEIDLDEIVEKTAKAGWEIYKRKGTTYYGIGNSLAYIASSIFNDDHRVIAVSAILDGEYGEYDICTGVPAIITRDGIREVVELNLTEDEESRFAKSNDILRDYMKTIGY.

NAD(+)-binding residues include Val16, Asp37, Arg42, and Tyr68. Arg91 lines the substrate pocket. Residues Ser104, 121-123, and Thr146 contribute to the NAD(+) site; that span reads ASN. Residue 123 to 126 coordinates substrate; that stretch reads NPVD. Position 151–154 (151–154) interacts with substrate; the sequence is DSSR. Positions 156 and 171 each coordinate beta-D-fructose 1,6-bisphosphate. The active-site Proton acceptor is His178. Thr233 provides a ligand contact to substrate.

It belongs to the LDH/MDH superfamily. LDH family. In terms of assembly, homotetramer.

It localises to the cytoplasm. It catalyses the reaction (S)-lactate + NAD(+) = pyruvate + NADH + H(+). It functions in the pathway fermentation; pyruvate fermentation to lactate; (S)-lactate from pyruvate: step 1/1. Its activity is regulated as follows. Allosterically activated by fructose 1,6-bisphosphate (FBP). In terms of biological role, catalyzes the conversion of lactate to pyruvate. The sequence is that of L-lactate dehydrogenase 3 from Bacillus cereus (strain ATCC 14579 / DSM 31 / CCUG 7414 / JCM 2152 / NBRC 15305 / NCIMB 9373 / NCTC 2599 / NRRL B-3711).